A 267-amino-acid chain; its full sequence is 2-keto-3-deoxy-L-rhamnonate aldolase (267 aa).

H49 serves as the catalytic Proton acceptor. Q151 lines the substrate pocket. Residue E153 participates in Mg(2+) binding. Residues A178 and D179 each contribute to the substrate site. D179 contributes to the Mg(2+) binding site.

It belongs to the HpcH/HpaI aldolase family. KDR aldolase subfamily. In terms of assembly, homohexamer. Requires Mg(2+) as cofactor.

The catalysed reaction is 2-dehydro-3-deoxy-L-rhamnonate = (S)-lactaldehyde + pyruvate. Catalyzes the reversible retro-aldol cleavage of 2-keto-3-deoxy-L-rhamnonate (KDR) to pyruvate and lactaldehyde. This chain is 2-keto-3-deoxy-L-rhamnonate aldolase, found in Escherichia coli O17:K52:H18 (strain UMN026 / ExPEC).